The primary structure comprises 320 residues: Cytochrome f (320 aa).

The signal sequence occupies residues 1-35 (MQTRKTFSWIKEQINRSISVSLMIYIITRPSISIA). Heme is bound by residues Tyr-36, Cys-56, Cys-59, and His-60. Residues 286–306 (VQGLLFFLASVILAQIFLVLK) traverse the membrane as a helical segment.

The protein belongs to the cytochrome f family. The 4 large subunits of the cytochrome b6-f complex are cytochrome b6, subunit IV (17 kDa polypeptide, petD), cytochrome f and the Rieske protein, while the 4 small subunits are PetG, PetL, PetM and PetN. The complex functions as a dimer. Heme serves as cofactor.

Its subcellular location is the plastid. It is found in the chloroplast thylakoid membrane. In terms of biological role, component of the cytochrome b6-f complex, which mediates electron transfer between photosystem II (PSII) and photosystem I (PSI), cyclic electron flow around PSI, and state transitions. The sequence is that of Cytochrome f from Daucus carota (Wild carrot).